The chain runs to 313 residues: Acetaldehyde dehydrogenase (313 aa).

12-15 (SGNI) lines the NAD(+) pocket. Catalysis depends on C132, which acts as the Acyl-thioester intermediate. NAD(+) contacts are provided by residues 163–171 (SAGPGTRAN) and N291.

It belongs to the acetaldehyde dehydrogenase family.

It catalyses the reaction acetaldehyde + NAD(+) + CoA = acetyl-CoA + NADH + H(+). The chain is Acetaldehyde dehydrogenase (bphG) from Burkholderia cepacia (Pseudomonas cepacia).